The chain runs to 91 residues: MKKLFASLALAAVVAPVWAATQTVTLSVPGMTCSACPITVKKAISEVEGVSKVDVTFETRQAVVTFDDAKTSVQKLTKATADAGYPSSVKQ.

Positions 1–19 (MKKLFASLALAAVVAPVWA) are cleaved as a signal peptide. The region spanning 22-88 (QTVTLSVPGM…ATADAGYPSS (67 aa)) is the HMA domain. 2 residues coordinate Hg(2+): C33 and C36.

This sequence belongs to the MerP family. In terms of assembly, monomer.

Its subcellular location is the periplasm. Its function is as follows. Involved in mercury resistance. Acts as a mercury scavenger that specifically binds to a mercuric ion in the periplasm and probably passes it to the cytoplasmic mercuric reductase MerA via the mercuric transport protein MerT. The polypeptide is Mercuric transport protein periplasmic component (Pseudomonas aeruginosa).